Reading from the N-terminus, the 641-residue chain is Threonine--tRNA ligase (641 aa).

In terms of domain architecture, TGS spans 1–61 (MPAITLPDGS…ADDASVRFIT (61 aa)). The segment at 243–536 (DHRRIGREMD…LIEQHAGRFP (294 aa)) is catalytic. Residues cysteine 336, histidine 387, and histidine 513 each contribute to the Zn(2+) site.

The protein belongs to the class-II aminoacyl-tRNA synthetase family. As to quaternary structure, homodimer. Zn(2+) is required as a cofactor.

It is found in the cytoplasm. It catalyses the reaction tRNA(Thr) + L-threonine + ATP = L-threonyl-tRNA(Thr) + AMP + diphosphate + H(+). Functionally, catalyzes the attachment of threonine to tRNA(Thr) in a two-step reaction: L-threonine is first activated by ATP to form Thr-AMP and then transferred to the acceptor end of tRNA(Thr). Also edits incorrectly charged L-seryl-tRNA(Thr). This chain is Threonine--tRNA ligase, found in Gluconacetobacter diazotrophicus (strain ATCC 49037 / DSM 5601 / CCUG 37298 / CIP 103539 / LMG 7603 / PAl5).